A 231-amino-acid polypeptide reads, in one-letter code: Large ribosomal subunit protein uL1 (231 aa).

Belongs to the universal ribosomal protein uL1 family. In terms of assembly, part of the 50S ribosomal subunit.

Functionally, binds directly to 23S rRNA. The L1 stalk is quite mobile in the ribosome, and is involved in E site tRNA release. Protein L1 is also a translational repressor protein, it controls the translation of the L11 operon by binding to its mRNA. This is Large ribosomal subunit protein uL1 from Allorhizobium ampelinum (strain ATCC BAA-846 / DSM 112012 / S4) (Agrobacterium vitis (strain S4)).